The chain runs to 343 residues: MSIATIPVSSLRRAPAPTTAPQAPLRWQVEDIAALYELPFMDLLFRAQQVHREHFDANEVQLSTLLSIKTGGCAEDCGYCPQSTHFETEVKASKLMPLAEVIEAARAAKDQGATRFCMGAAWRSPKERDMERVTEIVREVRSLGLETCMTLGMLQAEQAQALKDAGLDYYNHNLDSAPEFYGDIISTRTYQDRLDTLGHVRQAGINVCCGGIVGMGESRLQRAGLIAQLANLSPYPESVPINNLVPVAGTPLANTAPLDPFEFVRTIAVARITMPLTMVRLSAGREQMDEALQALCFAAGANSIFYGDKLLTTSNPQADRDRQLFERLGLKTQGARPAAQQAQ.

The Radical SAM core domain maps to 58–285 (NEVQLSTLLS…LTMVRLSAGR (228 aa)). [4Fe-4S] cluster-binding residues include cysteine 73, cysteine 77, and cysteine 80. Cysteine 117, cysteine 148, cysteine 208, and arginine 280 together coordinate [2Fe-2S] cluster.

This sequence belongs to the radical SAM superfamily. Biotin synthase family. As to quaternary structure, homodimer. [4Fe-4S] cluster is required as a cofactor. It depends on [2Fe-2S] cluster as a cofactor.

It catalyses the reaction (4R,5S)-dethiobiotin + (sulfur carrier)-SH + 2 reduced [2Fe-2S]-[ferredoxin] + 2 S-adenosyl-L-methionine = (sulfur carrier)-H + biotin + 2 5'-deoxyadenosine + 2 L-methionine + 2 oxidized [2Fe-2S]-[ferredoxin]. It functions in the pathway cofactor biosynthesis; biotin biosynthesis; biotin from 7,8-diaminononanoate: step 2/2. Catalyzes the conversion of dethiobiotin (DTB) to biotin by the insertion of a sulfur atom into dethiobiotin via a radical-based mechanism. The protein is Biotin synthase 2 of Polaromonas sp. (strain JS666 / ATCC BAA-500).